Here is a 362-residue protein sequence, read N- to C-terminus: 3-dehydroquinate synthase (362 aa).

NAD(+) contacts are provided by residues 70–75 (DGEKYK), 104–108 (GVIGD), 128–129 (TT), lysine 141, lysine 150, and 168–171 (TLNT). Positions 183, 246, and 263 each coordinate Zn(2+).

Belongs to the sugar phosphate cyclases superfamily. Dehydroquinate synthase family. The cofactor is NAD(+). It depends on Co(2+) as a cofactor. Zn(2+) serves as cofactor.

It is found in the cytoplasm. The enzyme catalyses 7-phospho-2-dehydro-3-deoxy-D-arabino-heptonate = 3-dehydroquinate + phosphate. It participates in metabolic intermediate biosynthesis; chorismate biosynthesis; chorismate from D-erythrose 4-phosphate and phosphoenolpyruvate: step 2/7. In terms of biological role, catalyzes the conversion of 3-deoxy-D-arabino-heptulosonate 7-phosphate (DAHP) to dehydroquinate (DHQ). The protein is 3-dehydroquinate synthase of Haemophilus influenzae (strain ATCC 51907 / DSM 11121 / KW20 / Rd).